An 88-amino-acid chain; its full sequence is Large ribosomal subunit protein bL27 (88 aa).

The disordered stretch occupies residues 1 to 26 (MAHKKGASSSSNGRDSEAKRLGVKRF).

It belongs to the bacterial ribosomal protein bL27 family.

The polypeptide is Large ribosomal subunit protein bL27 (Corynebacterium glutamicum (strain R)).